Consider the following 86-residue polypeptide: Teretoxin Tsu6.16 (86 aa).

Positions 1-21 are cleaved as a signal peptide; that stretch reads MATSGRLLCVCLVMGLVFESL. Residues 22-46 constitute a propeptide that is removed on maturation; the sequence is GYLTGREKRPAENLEASVQRRWYLN.

Belongs to the teretoxin M (TM) superfamily. Post-translationally, contains 3 disulfide bonds. Expressed by the venom duct.

It localises to the secreted. The sequence is that of Teretoxin Tsu6.16 from Terebra subulata (Chocolate spotted auger).